A 707-amino-acid chain; its full sequence is Elongation factor G (707 aa).

The tr-type G domain occupies 8–297 (ERVRNIGIAA…AVVDYLPSPV (290 aa)). Residues 17–24 (AHIDAGKT), 96–100 (DTPGH), and 150–153 (NKMD) contribute to the GTP site.

Belongs to the TRAFAC class translation factor GTPase superfamily. Classic translation factor GTPase family. EF-G/EF-2 subfamily.

The protein resides in the cytoplasm. Functionally, catalyzes the GTP-dependent ribosomal translocation step during translation elongation. During this step, the ribosome changes from the pre-translocational (PRE) to the post-translocational (POST) state as the newly formed A-site-bound peptidyl-tRNA and P-site-bound deacylated tRNA move to the P and E sites, respectively. Catalyzes the coordinated movement of the two tRNA molecules, the mRNA and conformational changes in the ribosome. The protein is Elongation factor G of Synechococcus sp. (strain JA-2-3B'a(2-13)) (Cyanobacteria bacterium Yellowstone B-Prime).